A 142-amino-acid polypeptide reads, in one-letter code: Large ribosomal subunit protein uL11 (142 aa).

The protein belongs to the universal ribosomal protein uL11 family. As to quaternary structure, part of the ribosomal stalk of the 50S ribosomal subunit. Interacts with L10 and the large rRNA to form the base of the stalk. L10 forms an elongated spine to which L12 dimers bind in a sequential fashion forming a multimeric L10(L12)X complex. In terms of processing, one or more lysine residues are methylated.

In terms of biological role, forms part of the ribosomal stalk which helps the ribosome interact with GTP-bound translation factors. The polypeptide is Large ribosomal subunit protein uL11 (Hahella chejuensis (strain KCTC 2396)).